Reading from the N-terminus, the 83-residue chain is Cytochrome b559 subunit alpha (83 aa).

A helical transmembrane segment spans residues 21 to 35 (VIHSITIPSLFIAGW). Histidine 23 contributes to the heme binding site.

The protein belongs to the PsbE/PsbF family. In terms of assembly, heterodimer of an alpha subunit and a beta subunit. PSII is composed of 1 copy each of membrane proteins PsbA, PsbB, PsbC, PsbD, PsbE, PsbF, PsbH, PsbI, PsbJ, PsbK, PsbL, PsbM, PsbT, PsbX, PsbY, PsbZ, Psb30/Ycf12, at least 3 peripheral proteins of the oxygen-evolving complex and a large number of cofactors. It forms dimeric complexes. It depends on heme b as a cofactor.

Its subcellular location is the plastid. It is found in the chloroplast thylakoid membrane. Its function is as follows. This b-type cytochrome is tightly associated with the reaction center of photosystem II (PSII). PSII is a light-driven water:plastoquinone oxidoreductase that uses light energy to abstract electrons from H(2)O, generating O(2) and a proton gradient subsequently used for ATP formation. It consists of a core antenna complex that captures photons, and an electron transfer chain that converts photonic excitation into a charge separation. This chain is Cytochrome b559 subunit alpha, found in Daucus carota (Wild carrot).